We begin with the raw amino-acid sequence, 109 residues long: Probable WRKY transcription factor 43 (109 aa).

A DNA-binding region (WRKY) is located at residues 24–89; that stretch reads SDADILDDGY…YEGIHNHPCE (66 aa).

Belongs to the WRKY group II-c family.

Its subcellular location is the nucleus. Transcription factor. Interacts specifically with the W box (5'-(T)TGAC[CT]-3'), a frequently occurring elicitor-responsive cis-acting element. The protein is Probable WRKY transcription factor 43 (WRKY43) of Arabidopsis thaliana (Mouse-ear cress).